We begin with the raw amino-acid sequence, 248 residues long: Tyrosine recombinase XerD-like (248 aa).

Residues 1 to 72 (MKSYIEPFIA…TANQFLYYLY (72 aa)) enclose the Core-binding (CB) domain. Residues 85–248 (DTMKVMRTEK…PVTLEKYYKS (164 aa)) enclose the Tyr recombinase domain. Catalysis depends on residues Lys149 and Arg213. Tyr245 (O-(3'-phospho-DNA)-tyrosine intermediate) is an active-site residue.

This sequence belongs to the 'phage' integrase family. XerD-like subfamily.

The protein resides in the cytoplasm. Functionally, putative tyrosine recombinase. Not involved in the cutting and rejoining of the recombining DNA molecules on dif(SL) site. The polypeptide is Tyrosine recombinase XerD-like (Streptococcus pyogenes serotype M28 (strain MGAS6180)).